The following is a 925-amino-acid chain: MITGLLKKVFGSRNERLIKQYRRTVAQINALEPKFEQLSDDELRGMTEAFRQRHAGGESLEALLPEAFAVCREASKRVMKMRHFDVQLIGGMVLNDNKIAEMRTGEGKTLTATLAVYLNAITGKGVHVVTVNDYLAQRDAEWMGRLYNFLGLSVGVNLSQMAHDQKQAAYNADITYGTNNEFGFDYLRDNMVYDPSQRVQRPLHYAIVDEVDSILIDEARTPLIISGQAENQTDLYQRMNGIPKLLERQIGEEKADGTGVEKPGDYYVDEKGHQVYLTEAGHEKAEEILSQLGLIGEGESLYAPQNITLMHHLYAALRAHSLFHRDQHYVVQNDEVVIVDEFTGRLMTGRRWSDGLHQAVEAKEGVTVQQENQTLATVTFQNYFRMYEKLAGMTGTADTEAYEFQEIYGLEVVVIPTNRPTQRKDLQDQIYKTGKERYDAVVRDIRDCYERGQPVLVGTTSIETSEYLSGLLDREQLPHQVLNAKQHAREAEIVAQAGRPKMITIATNMAGRGTDIVLGGNVEKQAGFIEADPNLSDADKAARIQQLKDEWQSLHEQVKAAGGLHIVGTERHESRRIDNQLRGRAGRQGDPGSSRFYLSLDDQLLRIFAGDRVRAIMERLKMPEGEPIEAGIVTRSIESAQRKVEGRNFDIRKQLLQYDDVANDQRKEIYKLRNDVLEANDVGEMVANLRESVLIELFRDHVPADTMEEQWNIAGLETRLREDWGLEVPLAKTIEGAQSIEDEELLNLIMKAATERYESKVAMVGRESFAGFERSVMLQSIDTHWREHLAALDHLRQGIHLRGYAQKDPKQEYKRESFELFARLLDVIKNEVTRVTFNVQIQSPEELEQASEQIEEGLSHLENVQYKHDEFAEGREPVEEAPSPRTGTAMAAAELALAGMPKVGRNDPCPCGSGKKFKQCHGKLS.

Residues Q87, 105–109 (GEGKT), and D515 contribute to the ATP site. The Zn(2+) site is built by C909, C911, C920, and H921.

It belongs to the SecA family. As to quaternary structure, monomer and homodimer. Part of the essential Sec protein translocation apparatus which comprises SecA, SecYEG and auxiliary proteins SecDF-YajC and YidC. Requires Zn(2+) as cofactor.

Its subcellular location is the cell inner membrane. The protein localises to the cytoplasm. The catalysed reaction is ATP + H2O + cellular proteinSide 1 = ADP + phosphate + cellular proteinSide 2.. In terms of biological role, part of the Sec protein translocase complex. Interacts with the SecYEG preprotein conducting channel. Has a central role in coupling the hydrolysis of ATP to the transfer of proteins into and across the cell membrane, serving both as a receptor for the preprotein-SecB complex and as an ATP-driven molecular motor driving the stepwise translocation of polypeptide chains across the membrane. This chain is Protein translocase subunit SecA, found in Cupriavidus taiwanensis (strain DSM 17343 / BCRC 17206 / CCUG 44338 / CIP 107171 / LMG 19424 / R1) (Ralstonia taiwanensis (strain LMG 19424)).